The sequence spans 166 residues: Small ribosomal subunit protein uS5 (166 aa).

The S5 DRBM domain occupies 11-74 (LQEKLIAVNR…EKARRNMINV (64 aa)).

Belongs to the universal ribosomal protein uS5 family. As to quaternary structure, part of the 30S ribosomal subunit. Contacts proteins S4 and S8.

Its function is as follows. With S4 and S12 plays an important role in translational accuracy. Located at the back of the 30S subunit body where it stabilizes the conformation of the head with respect to the body. This chain is Small ribosomal subunit protein uS5, found in Haemophilus influenzae (strain 86-028NP).